Consider the following 132-residue polypeptide: UPF0299 membrane protein YohJ (132 aa).

4 consecutive transmembrane segments (helical) span residues 7–27 (IIWQYLRAFVLIYACLYAGIF), 31–51 (LLPVTIPGSIIGMLILFVLLA), 63–83 (GCYVLIRYMALLFVPIGVGVM), and 93–113 (FGPVVVSCAVSTLVVFLVVSW).

Belongs to the UPF0299 family.

The protein resides in the cell inner membrane. In Shigella boydii serotype 4 (strain Sb227), this protein is UPF0299 membrane protein YohJ.